The primary structure comprises 449 residues: UDP-N-acetylmuramoylalanine--D-glutamate ligase (449 aa).

118-124 (GTNGKTT) serves as a coordination point for ATP.

It belongs to the MurCDEF family.

Its subcellular location is the cytoplasm. The enzyme catalyses UDP-N-acetyl-alpha-D-muramoyl-L-alanine + D-glutamate + ATP = UDP-N-acetyl-alpha-D-muramoyl-L-alanyl-D-glutamate + ADP + phosphate + H(+). It participates in cell wall biogenesis; peptidoglycan biosynthesis. Cell wall formation. Catalyzes the addition of glutamate to the nucleotide precursor UDP-N-acetylmuramoyl-L-alanine (UMA). In Staphylococcus epidermidis (strain ATCC 12228 / FDA PCI 1200), this protein is UDP-N-acetylmuramoylalanine--D-glutamate ligase.